Consider the following 461-residue polypeptide: Signal recognition particle receptor FtsY (461 aa).

A TPR repeat occupies 105-138 (FESLYNVAKIYHQLEKPDKALEYAQRAEKLVPYE). Residues 267–274 (GVNGSGKT), 349–353 (DTAGR), and 413–416 (TKLD) each bind GTP.

It belongs to the GTP-binding SRP family. FtsY subfamily. Part of the signal recognition particle protein translocation system, which is composed of SRP and FtsY.

It is found in the cell inner membrane. The protein resides in the cytoplasm. The catalysed reaction is GTP + H2O = GDP + phosphate + H(+). Involved in targeting and insertion of nascent membrane proteins into the cytoplasmic membrane. Acts as a receptor for the complex formed by the signal recognition particle (SRP) and the ribosome-nascent chain (RNC). The polypeptide is Signal recognition particle receptor FtsY (Aquifex aeolicus (strain VF5)).